The sequence spans 369 residues: UDP-N-acetylglucosamine--N-acetylmuramyl-(pentapeptide) pyrophosphoryl-undecaprenol N-acetylglucosamine transferase (369 aa).

UDP-N-acetyl-alpha-D-glucosamine-binding positions include 15–17, Asn126, Arg169, Ser197, and Gln299; that span reads TGG.

Belongs to the glycosyltransferase 28 family. MurG subfamily.

The protein resides in the cell inner membrane. It carries out the reaction di-trans,octa-cis-undecaprenyl diphospho-N-acetyl-alpha-D-muramoyl-L-alanyl-D-glutamyl-meso-2,6-diaminopimeloyl-D-alanyl-D-alanine + UDP-N-acetyl-alpha-D-glucosamine = di-trans,octa-cis-undecaprenyl diphospho-[N-acetyl-alpha-D-glucosaminyl-(1-&gt;4)]-N-acetyl-alpha-D-muramoyl-L-alanyl-D-glutamyl-meso-2,6-diaminopimeloyl-D-alanyl-D-alanine + UDP + H(+). It participates in cell wall biogenesis; peptidoglycan biosynthesis. Cell wall formation. Catalyzes the transfer of a GlcNAc subunit on undecaprenyl-pyrophosphoryl-MurNAc-pentapeptide (lipid intermediate I) to form undecaprenyl-pyrophosphoryl-MurNAc-(pentapeptide)GlcNAc (lipid intermediate II). The protein is UDP-N-acetylglucosamine--N-acetylmuramyl-(pentapeptide) pyrophosphoryl-undecaprenol N-acetylglucosamine transferase of Methylobacterium radiotolerans (strain ATCC 27329 / DSM 1819 / JCM 2831 / NBRC 15690 / NCIMB 10815 / 0-1).